The chain runs to 1024 residues: E3 ISG15--protein ligase HERC5 (1024 aa).

Residues 1–13 (MERRSRRKSRRNG) are compositionally biased toward basic residues. Residues 1–28 (MERRSRRKSRRNGRSTAGKAAATQPAKS) form a disordered region. 5 RCC1 repeats span residues 96-155 (NMKI…ALSK), 156-208 (GGEL…ALSM), 209-260 (SGNI…LLTQ), 262-312 (GLLF…AYVS), and 314-364 (LGKV…LIMI). The region spanning 702–1024 (ENEDLRKELW…EAINNNRGFG (323 aa)) is the HECT domain. The active-site Glycyl thioester intermediate is the Cys-994.

In terms of assembly, (Microbial infection) Interacts with human cytomegalovirus protein UL26; this interaction inhibits global protein ISGylation. (Microbial infection) Interacts with Kaposi's sarcoma-associated herpesvirus protein v-IRF1; this interaction inhibits global protein ISGylation. As to quaternary structure, binds to CCNA1, CCNB1, CCND1 and CCNE1. Interacts with UBE2L6. Interacts with IRF3, this interaction is marginal in resting cells but enhanced upon viral infection. Interacts with influenza A virus NS1. Post-translationally, ISGylated. Expressed in testis and to a lesser degree in brain, ovary and placenta. Found in most tissues at low levels.

The protein resides in the cytoplasm. It is found in the perinuclear region. In terms of biological role, major E3 ligase for ISG15 conjugation. Acts as a positive regulator of innate antiviral response in cells induced by interferon. Functions as part of the ISGylation machinery that recognizes target proteins in a broad and relatively non-specific manner. Catalyzes ISGylation of IRF3 which results in sustained activation, it attenuates IRF3-PIN1 interaction, which antagonizes IRF3 ubiquitination and degradation, and boosts the antiviral response. Mediates ISGylation of the phosphatase PTEN leading to its degradation, thus alleviating its suppression of the PI3K-AKT signaling pathway and promoting the production of cytokines that facilitate bacterial clearance. Interferes with the function of key viral structural proteins such as ebolavirus structural protein VP40 or HIV-1 protein GAG. Catalyzes ISGylation of influenza A viral NS1 which attenuates virulence; ISGylated NS1 fails to form homodimers and thus to interact with its RNA targets. Catalyzes ISGylation of papillomavirus type 16 L1 protein which results in dominant-negative effect on virus infectivity. Physically associated with polyribosomes, broadly modifies newly synthesized proteins in a cotranslational manner. In an interferon-stimulated cell, newly translated viral proteins are primary targets of ISG15. Promotes parkin/PRKN ubiquitin E3 ligase activity by suppressing the intramolecular interaction that maintains its autoinhibited conformation. Functionally, (Microbial infection) Functions as an E3 ligase for ISGylation of hepatitis B virus protein X leading to enhanced viral replication due to increased interferon resistance. This Homo sapiens (Human) protein is E3 ISG15--protein ligase HERC5 (HERC5).